A 185-amino-acid polypeptide reads, in one-letter code: Transcriptional repressor NrdR (185 aa).

Residues 1 to 24 are disordered; sequence MRCPFCGGPDTQVKDSRPSEDSSA. A zinc finger spans residues 3-34; that stretch reads CPFCGGPDTQVKDSRPSEDSSAIRRRRVCPDC. Basic and acidic residues predominate over residues 12-24; that stretch reads QVKDSRPSEDSSA. In terms of domain architecture, ATP-cone spans 49–139; it reads LVVLKRSGKR…VYKNFREAQD (91 aa). Positions 148–185 are disordered; it reads GERLDGEGDLPEQGDAVPAPPDEAVAAPRRGRPARKRA. A compositionally biased stretch (basic residues) spans 176–185; it reads RRGRPARKRA.

Belongs to the NrdR family. Zn(2+) serves as cofactor.

In terms of biological role, negatively regulates transcription of bacterial ribonucleotide reductase nrd genes and operons by binding to NrdR-boxes. The sequence is that of Transcriptional repressor NrdR from Methylorubrum extorquens (strain CM4 / NCIMB 13688) (Methylobacterium extorquens).